Here is a 473-residue protein sequence, read N- to C-terminus: Photosystem II CP43 reaction center protein (473 aa).

A propeptide spanning residues 1–14 (MKTLYSLRRFSHVE) is cleaved from the precursor. N-acetylthreonine is present on T15. T15 bears the Phosphothreonine mark. A run of 5 helical transmembrane segments spans residues 69–93 (LFEVAHFGPEKPMYEQGLILLPHLA), 134–155 (LLGPEIIEESFPLFRYVWKDRN), 178–200 (KALYFGGVYDTWAPGGGDVRKIT), 255–275 (KPFAWARRALVWSGEAYLSYS), and 291–312 (WFNNTAYPSEFYGPTGPEASQA). E367 contributes to the [CaMn4O5] cluster binding site. A helical membrane pass occupies residues 447–471 (RARAAAAGFEKGIDRDFEPVLSMTP).

This sequence belongs to the PsbB/PsbC family. PsbC subfamily. As to quaternary structure, PSII is composed of 1 copy each of membrane proteins PsbA, PsbB, PsbC, PsbD, PsbE, PsbF, PsbH, PsbI, PsbJ, PsbK, PsbL, PsbM, PsbT, PsbX, PsbY, PsbZ, Psb30/Ycf12, at least 3 peripheral proteins of the oxygen-evolving complex and a large number of cofactors. It forms dimeric complexes. Binds multiple chlorophylls and provides some of the ligands for the Ca-4Mn-5O cluster of the oxygen-evolving complex. It may also provide a ligand for a Cl- that is required for oxygen evolution. PSII binds additional chlorophylls, carotenoids and specific lipids. is required as a cofactor.

It is found in the plastid membrane. One of the components of the core complex of photosystem II (PSII). It binds chlorophyll and helps catalyze the primary light-induced photochemical processes of PSII. PSII is a light-driven water:plastoquinone oxidoreductase, using light energy to abstract electrons from H(2)O, generating O(2) and a proton gradient subsequently used for ATP formation. This chain is Photosystem II CP43 reaction center protein, found in Cuscuta obtusiflora (Peruvian dodder).